Reading from the N-terminus, the 435-residue chain is ATP-dependent protease ATPase subunit HslU (435 aa).

ATP is bound by residues Ile-18, 60–65 (GVGKTE), Asp-248, Glu-313, and Arg-385.

Belongs to the ClpX chaperone family. HslU subfamily. A double ring-shaped homohexamer of HslV is capped on each side by a ring-shaped HslU homohexamer. The assembly of the HslU/HslV complex is dependent on binding of ATP.

The protein localises to the cytoplasm. Its function is as follows. ATPase subunit of a proteasome-like degradation complex; this subunit has chaperone activity. The binding of ATP and its subsequent hydrolysis by HslU are essential for unfolding of protein substrates subsequently hydrolyzed by HslV. HslU recognizes the N-terminal part of its protein substrates and unfolds these before they are guided to HslV for hydrolysis. The sequence is that of ATP-dependent protease ATPase subunit HslU from Rhizobium leguminosarum bv. trifolii (strain WSM2304).